Here is a 571-residue protein sequence, read N- to C-terminus: Chitin-inducible gibberellin-responsive protein 1 (571 aa).

A compositionally biased stretch (polar residues) spans 61-77 (TNTPDNQSSTETISAQP). Disordered regions lie at residues 61–80 (TNTPDNQSSTETISAQPISP) and 151–180 (QRSRTWSHESRQPLPGVGRSQFASGGYPTA). In terms of domain architecture, GRAS spans 192-571 (ELREDPQIIV…RKLISASAWH (380 aa)). Positions 199-259 (IIVKQLLTRC…VARHGNSGTN (61 aa)) are leucine repeat I (LRI). Residues 278 to 343 (MRILYNICPY…GGPPRVRITG (66 aa)) are VHIID. The VHIID signature appears at 309–313 (IHIID). The leucine repeat II (LRII) stretch occupies residues 359-391 (IVGKMLKSMSEEFKIPLEFTPLSVYATQVTKEM). The interval 400 to 494 (LSVNFTLQLH…QHCLAKDIVN (95 aa)) is PFYRE. Positions 497–571 (ACEGKDRVER…RKLISASAWH (75 aa)) are SAW.

Belongs to the GRAS family.

It localises to the nucleus. In terms of biological role, may play a regulatory role in the early step of oligosaccharide elicitor response, downstream of the membrane-associated high-affinity chitin-binding protein. The chain is Chitin-inducible gibberellin-responsive protein 1 (CIGR1) from Oryza sativa subsp. japonica (Rice).